The chain runs to 436 residues: 3-ketoacyl-CoA thiolase (436 aa).

The active-site Acyl-thioester intermediate is the Cys99. Residues His392 and Cys422 each act as proton acceptor in the active site.

It belongs to the thiolase-like superfamily. Thiolase family. Heterotetramer of two alpha chains (FadJ) and two beta chains (FadI).

The protein localises to the cytoplasm. It carries out the reaction an acyl-CoA + acetyl-CoA = a 3-oxoacyl-CoA + CoA. It participates in lipid metabolism; fatty acid beta-oxidation. Its function is as follows. Catalyzes the final step of fatty acid oxidation in which acetyl-CoA is released and the CoA ester of a fatty acid two carbons shorter is formed. The polypeptide is 3-ketoacyl-CoA thiolase (Salmonella paratyphi B (strain ATCC BAA-1250 / SPB7)).